Here is a 552-residue protein sequence, read N- to C-terminus: ATP synthase subunit alpha (552 aa).

173–180 provides a ligand contact to ATP; the sequence is GDRQTGKS. The interval 509-552 is disordered; the sequence is KPQFSGGSKGSNVPKDVDAGATDADDISQEKITTRKGGATAARG.

Belongs to the ATPase alpha/beta chains family. In terms of assembly, F-type ATPases have 2 components, CF(1) - the catalytic core - and CF(0) - the membrane proton channel. CF(1) has five subunits: alpha(3), beta(3), gamma(1), delta(1), epsilon(1). CF(0) has three main subunits: a(1), b(2) and c(9-12). The alpha and beta chains form an alternating ring which encloses part of the gamma chain. CF(1) is attached to CF(0) by a central stalk formed by the gamma and epsilon chains, while a peripheral stalk is formed by the delta and b chains.

It is found in the cell membrane. The catalysed reaction is ATP + H2O + 4 H(+)(in) = ADP + phosphate + 5 H(+)(out). Produces ATP from ADP in the presence of a proton gradient across the membrane. The alpha chain is a regulatory subunit. In Kineococcus radiotolerans (strain ATCC BAA-149 / DSM 14245 / SRS30216), this protein is ATP synthase subunit alpha.